The sequence spans 157 residues: Endoribonuclease YbeY (157 aa).

Residues histidine 122, histidine 126, and histidine 132 each coordinate Zn(2+).

This sequence belongs to the endoribonuclease YbeY family. It depends on Zn(2+) as a cofactor.

It is found in the cytoplasm. Its function is as follows. Single strand-specific metallo-endoribonuclease involved in late-stage 70S ribosome quality control and in maturation of the 3' terminus of the 16S rRNA. This Bacillus velezensis (strain DSM 23117 / BGSC 10A6 / LMG 26770 / FZB42) (Bacillus amyloliquefaciens subsp. plantarum) protein is Endoribonuclease YbeY.